The chain runs to 318 residues: Putative S-adenosyl-L-methionine-dependent methyltransferase MMAR_1595 (318 aa).

Residues Glu-132 and 161 to 162 (DL) each bind S-adenosyl-L-methionine.

Belongs to the UPF0677 family.

Exhibits S-adenosyl-L-methionine-dependent methyltransferase activity. This is Putative S-adenosyl-L-methionine-dependent methyltransferase MMAR_1595 from Mycobacterium marinum (strain ATCC BAA-535 / M).